The primary structure comprises 341 residues: Glyceraldehyde-3-phosphate dehydrogenase 3.1 (341 aa).

NAD(+)-binding positions include 13–14 (RI), D35, and R85. Residues 157–159 (SCT), T188, 217–218 (TG), and R240 each bind D-glyceraldehyde 3-phosphate. C158 acts as the Nucleophile in catalysis. N322 provides a ligand contact to NAD(+).

It belongs to the glyceraldehyde-3-phosphate dehydrogenase family. Homotetramer.

The protein localises to the cytoplasm. The catalysed reaction is D-glyceraldehyde 3-phosphate + phosphate + NAD(+) = (2R)-3-phospho-glyceroyl phosphate + NADH + H(+). The protein operates within carbohydrate degradation; glycolysis; pyruvate from D-glyceraldehyde 3-phosphate: step 1/5. The protein is Glyceraldehyde-3-phosphate dehydrogenase 3.1 of Caenorhabditis briggsae.